We begin with the raw amino-acid sequence, 382 residues long: Chaperone protein DnaJ (382 aa).

Residues 5-70 (DYYEVLGLKK…QKRAAYDQYG (66 aa)) form the J domain. The CR-type zinc-finger motif lies at 134–212 (GTTKDIQINT…CHGEGRVHKK (79 aa)). Zn(2+) is bound by residues Cys147, Cys150, Cys164, Cys167, Cys186, Cys189, Cys200, and Cys203. 4 CXXCXGXG motif repeats span residues 147-154 (CDSCGGSG), 164-171 (CPHCHGSG), 186-193 (CPSCHGSG), and 200-207 (CRSCHGEG).

The protein belongs to the DnaJ family. Homodimer. Zn(2+) is required as a cofactor.

It is found in the cytoplasm. Its function is as follows. Participates actively in the response to hyperosmotic and heat shock by preventing the aggregation of stress-denatured proteins and by disaggregating proteins, also in an autonomous, DnaK-independent fashion. Unfolded proteins bind initially to DnaJ; upon interaction with the DnaJ-bound protein, DnaK hydrolyzes its bound ATP, resulting in the formation of a stable complex. GrpE releases ADP from DnaK; ATP binding to DnaK triggers the release of the substrate protein, thus completing the reaction cycle. Several rounds of ATP-dependent interactions between DnaJ, DnaK and GrpE are required for fully efficient folding. Also involved, together with DnaK and GrpE, in the DNA replication of plasmids through activation of initiation proteins. The protein is Chaperone protein DnaJ of Haemophilus influenzae (strain PittGG).